The sequence spans 1077 residues: Ubiquitin carboxyl-terminal hydrolase 28 (1077 aa).

The tract at residues 60–80 is disordered; it reads DERVKEPSQDTVATEPSEVEG. S67 is modified (phosphoserine). In terms of domain architecture, UIM spans 97–116; it reads DNKDDLQAAIALSLLESPKI. Residue K99 forms a Glycyl lysine isopeptide (Lys-Gly) (interchain with G-Cter in SUMO2) linkage. The region spanning 162–650 is the USP domain; it reads VGLKNVGNTC…SAYCLMYIND (489 aa). The active-site Nucleophile is the C171. S375 is modified (phosphoserine). The tract at residues 477–535 is disordered; sequence HCSVSDQTSKESTSTESSSQDVESTFSSPEDSLPKSKPLTSSRSSMEMPSQPAPRTVTD. The span at 481–501 shows a compositional bias: low complexity; it reads SDQTSKESTSTESSSQDVEST. Positions 514–524 are enriched in polar residues; the sequence is PLTSSRSSMEM. At S550 the chain carries Phosphoserine. The Proton acceptor role is filled by H600. The tract at residues 697 to 728 is disordered; it reads EEQSCKIPQMESSTNSSSQDYSTSQEPSVASS. Low complexity predominate over residues 707-724; the sequence is ESSTNSSSQDYSTSQEPS. S714 is modified (phosphoserine). K759 is covalently cross-linked (Glycyl lysine isopeptide (Lys-Gly) (interchain with G-Cter in SUMO2)). At T1048 the chain carries Phosphothreonine.

The protein belongs to the peptidase C19 family. USP28 subfamily. Interacts with ZNF304. Interacts with PRKD1. Interacts with TP53BP1. Interacts with isoform 1 of FBXW7; following DNA damage, dissociates from FBXW7 leading to degradation of MYC. In terms of processing, degraded upon nickel ion level or hypoxia exposure. Post-translationally, phosphorylated upon DNA damage at Ser-67 and Ser-714, by ATM or ATR. Phosphorylated by PRKD1.

Its subcellular location is the nucleus. The protein localises to the nucleoplasm. The catalysed reaction is Thiol-dependent hydrolysis of ester, thioester, amide, peptide and isopeptide bonds formed by the C-terminal Gly of ubiquitin (a 76-residue protein attached to proteins as an intracellular targeting signal).. In terms of biological role, deubiquitinase involved in DNA damage response checkpoint and MYC proto-oncogene stability. Involved in DNA damage induced apoptosis by specifically deubiquitinating proteins of the DNA damage pathway such as CLSPN. Also involved in G2 DNA damage checkpoint, by deubiquitinating CLSPN, and preventing its degradation by the anaphase promoting complex/cyclosome (APC/C). In contrast, it does not deubiquitinate PLK1. Specifically deubiquitinates MYC in the nucleoplasm, leading to prevent MYC degradation by the proteasome: acts by specifically interacting with isoform 1 of FBXW7 (FBW7alpha) in the nucleoplasm and counteracting ubiquitination of MYC by the SCF(FBW7) complex. In contrast, it does not interact with isoform 4 of FBXW7 (FBW7gamma) in the nucleolus, allowing MYC degradation and explaining the selective MYC degradation in the nucleolus. Deubiquitinates ZNF304, hence preventing ZNF304 degradation by the proteasome and leading to the activated KRAS-mediated promoter hypermethylation and transcriptional silencing of tumor suppressor genes (TSGs) in a subset of colorectal cancers (CRC) cells. This is Ubiquitin carboxyl-terminal hydrolase 28 (USP28) from Homo sapiens (Human).